The sequence spans 339 residues: Ketol-acid reductoisomerase (NADP(+)) (339 aa).

One can recognise a KARI N-terminal Rossmann domain in the interval 1 to 182; sequence MKVYYDSDAD…GGGRSGVIET (182 aa). NADP(+)-binding positions include 24 to 27, R48, S51, S53, and 83 to 86; these read YGSQ and DEHQ. Residue H108 is part of the active site. G134 is a binding site for NADP(+). Positions 183-328 constitute a KARI C-terminal knotted domain; that stretch reads TFREEVETDL…ARLRKMMPWI (146 aa). Positions 191, 195, 227, and 231 each coordinate Mg(2+). Residue S252 participates in substrate binding.

Belongs to the ketol-acid reductoisomerase family. The cofactor is Mg(2+).

It carries out the reaction (2R)-2,3-dihydroxy-3-methylbutanoate + NADP(+) = (2S)-2-acetolactate + NADPH + H(+). The catalysed reaction is (2R,3R)-2,3-dihydroxy-3-methylpentanoate + NADP(+) = (S)-2-ethyl-2-hydroxy-3-oxobutanoate + NADPH + H(+). Its pathway is amino-acid biosynthesis; L-isoleucine biosynthesis; L-isoleucine from 2-oxobutanoate: step 2/4. The protein operates within amino-acid biosynthesis; L-valine biosynthesis; L-valine from pyruvate: step 2/4. In terms of biological role, involved in the biosynthesis of branched-chain amino acids (BCAA). Catalyzes an alkyl-migration followed by a ketol-acid reduction of (S)-2-acetolactate (S2AL) to yield (R)-2,3-dihydroxy-isovalerate. In the isomerase reaction, S2AL is rearranged via a Mg-dependent methyl migration to produce 3-hydroxy-3-methyl-2-ketobutyrate (HMKB). In the reductase reaction, this 2-ketoacid undergoes a metal-dependent reduction by NADPH to yield (R)-2,3-dihydroxy-isovalerate. The sequence is that of Ketol-acid reductoisomerase (NADP(+)) from Zymomonas mobilis subsp. mobilis (strain ATCC 31821 / ZM4 / CP4).